A 234-amino-acid chain; its full sequence is UPF0173 metal-dependent hydrolase Atu1317 (234 aa).

It belongs to the UPF0173 family.

This chain is UPF0173 metal-dependent hydrolase Atu1317, found in Agrobacterium fabrum (strain C58 / ATCC 33970) (Agrobacterium tumefaciens (strain C58)).